Reading from the N-terminus, the 835-residue chain is Protein translocase subunit SecA (835 aa).

ATP is bound by residues Gln85, 103–107, and Asp495; that span reads GEGKT. Residues 806–835 are disordered; that stretch reads KVFLNNDSSDDESSKKRRTRKVRTSKKPWN. Basic residues predominate over residues 820–835; that stretch reads KKRRTRKVRTSKKPWN.

It belongs to the SecA family. Monomer and homodimer. Part of the essential Sec protein translocation apparatus which comprises SecA, SecYEG and auxiliary proteins SecDF. Other proteins may also be involved.

It is found in the cell membrane. Its subcellular location is the cytoplasm. It catalyses the reaction ATP + H2O + cellular proteinSide 1 = ADP + phosphate + cellular proteinSide 2.. Part of the Sec protein translocase complex. Interacts with the SecYEG preprotein conducting channel. Has a central role in coupling the hydrolysis of ATP to the transfer of proteins into and across the cell membrane, serving as an ATP-driven molecular motor driving the stepwise translocation of polypeptide chains across the membrane. The chain is Protein translocase subunit SecA from Onion yellows phytoplasma (strain OY-M).